A 568-amino-acid chain; its full sequence is Dihydroxy-acid dehydratase (568 aa).

Cys-59 is a binding site for [2Fe-2S] cluster. Asp-91 serves as a coordination point for Mg(2+). Residue Cys-132 coordinates [2Fe-2S] cluster. Mg(2+) contacts are provided by Asp-133 and Lys-134. Position 134 is an N6-carboxylysine (Lys-134). A [2Fe-2S] cluster-binding site is contributed by Cys-204. Mg(2+) is bound at residue Glu-456. The active-site Proton acceptor is the Ser-482.

This sequence belongs to the IlvD/Edd family. Homodimer. The cofactor is [2Fe-2S] cluster. Mg(2+) is required as a cofactor.

It carries out the reaction (2R)-2,3-dihydroxy-3-methylbutanoate = 3-methyl-2-oxobutanoate + H2O. The catalysed reaction is (2R,3R)-2,3-dihydroxy-3-methylpentanoate = (S)-3-methyl-2-oxopentanoate + H2O. It participates in amino-acid biosynthesis; L-isoleucine biosynthesis; L-isoleucine from 2-oxobutanoate: step 3/4. It functions in the pathway amino-acid biosynthesis; L-valine biosynthesis; L-valine from pyruvate: step 3/4. Functions in the biosynthesis of branched-chain amino acids. Catalyzes the dehydration of (2R,3R)-2,3-dihydroxy-3-methylpentanoate (2,3-dihydroxy-3-methylvalerate) into 2-oxo-3-methylpentanoate (2-oxo-3-methylvalerate) and of (2R)-2,3-dihydroxy-3-methylbutanoate (2,3-dihydroxyisovalerate) into 2-oxo-3-methylbutanoate (2-oxoisovalerate), the penultimate precursor to L-isoleucine and L-valine, respectively. The polypeptide is Dihydroxy-acid dehydratase (Verminephrobacter eiseniae (strain EF01-2)).